The chain runs to 643 residues: Threonine--tRNA ligase (643 aa).

The 61-residue stretch at 1–61 folds into the TGS domain; that stretch reads MPIITLPDGS…EQDATLEIIT (61 aa). The tract at residues 243 to 534 is catalytic; sequence DHRKIGKALD…ITEEYAGFFP (292 aa). Positions 334, 385, and 511 each coordinate Zn(2+).

Belongs to the class-II aminoacyl-tRNA synthetase family. As to quaternary structure, homodimer. The cofactor is Zn(2+).

It localises to the cytoplasm. The catalysed reaction is tRNA(Thr) + L-threonine + ATP = L-threonyl-tRNA(Thr) + AMP + diphosphate + H(+). In terms of biological role, catalyzes the attachment of threonine to tRNA(Thr) in a two-step reaction: L-threonine is first activated by ATP to form Thr-AMP and then transferred to the acceptor end of tRNA(Thr). Also edits incorrectly charged L-seryl-tRNA(Thr). This chain is Threonine--tRNA ligase, found in Haemophilus influenzae (strain ATCC 51907 / DSM 11121 / KW20 / Rd).